We begin with the raw amino-acid sequence, 429 residues long: Ribosomal RNA small subunit methyltransferase B (429 aa).

Residues 254 to 260 (CAGPGGK), Asp277, Asp303, and Asp322 contribute to the S-adenosyl-L-methionine site. The active-site Nucleophile is the Cys375.

The protein belongs to the class I-like SAM-binding methyltransferase superfamily. RsmB/NOP family.

Its subcellular location is the cytoplasm. It carries out the reaction cytidine(967) in 16S rRNA + S-adenosyl-L-methionine = 5-methylcytidine(967) in 16S rRNA + S-adenosyl-L-homocysteine + H(+). In terms of biological role, specifically methylates the cytosine at position 967 (m5C967) of 16S rRNA. The sequence is that of Ribosomal RNA small subunit methyltransferase B from Escherichia coli O6:K15:H31 (strain 536 / UPEC).